Here is a 156-residue protein sequence, read N- to C-terminus: 6,7-dimethyl-8-ribityllumazine synthase (156 aa).

5-amino-6-(D-ribitylamino)uracil contacts are provided by residues phenylalanine 23, 57 to 59, and 81 to 83; these read AYE and AII. 86-87 serves as a coordination point for (2S)-2-hydroxy-3-oxobutyl phosphate; sequence GT. Histidine 89 acts as the Proton donor in catalysis. Phenylalanine 114 provides a ligand contact to 5-amino-6-(D-ribitylamino)uracil. Arginine 128 lines the (2S)-2-hydroxy-3-oxobutyl phosphate pocket.

Belongs to the DMRL synthase family.

The enzyme catalyses (2S)-2-hydroxy-3-oxobutyl phosphate + 5-amino-6-(D-ribitylamino)uracil = 6,7-dimethyl-8-(1-D-ribityl)lumazine + phosphate + 2 H2O + H(+). Its pathway is cofactor biosynthesis; riboflavin biosynthesis; riboflavin from 2-hydroxy-3-oxobutyl phosphate and 5-amino-6-(D-ribitylamino)uracil: step 1/2. Catalyzes the formation of 6,7-dimethyl-8-ribityllumazine by condensation of 5-amino-6-(D-ribitylamino)uracil with 3,4-dihydroxy-2-butanone 4-phosphate. This is the penultimate step in the biosynthesis of riboflavin. This Helicobacter pylori (strain Shi470) protein is 6,7-dimethyl-8-ribityllumazine synthase.